A 556-amino-acid polypeptide reads, in one-letter code: Glutamine--tRNA ligase (556 aa).

A 'HIGH' region motif is present at residues 34–44 (PEPNGFLHIGH). ATP contacts are provided by residues 35–37 (EPN) and 41–47 (HIGHAKA). L-glutamine is bound by residues D67 and Y212. Residues T231, 261-262 (RL), and 269-271 (MSK) each bind ATP. Residues 268–272 (LMSKR) carry the 'KMSKS' region motif.

This sequence belongs to the class-I aminoacyl-tRNA synthetase family. In terms of assembly, monomer.

It localises to the cytoplasm. It carries out the reaction tRNA(Gln) + L-glutamine + ATP = L-glutaminyl-tRNA(Gln) + AMP + diphosphate. This Colwellia psychrerythraea (strain 34H / ATCC BAA-681) (Vibrio psychroerythus) protein is Glutamine--tRNA ligase.